The sequence spans 572 residues: M-phase inducer phosphatase 3 (572 aa).

Disordered regions lie at residues Asn95–Glu117 and Ser304–Gly354. The 108-residue stretch at Leu420–Glu527 folds into the Rhodanese domain. Cys476 is an active-site residue.

Belongs to the MPI phosphatase family.

The catalysed reaction is O-phospho-L-tyrosyl-[protein] + H2O = L-tyrosyl-[protein] + phosphate. Its function is as follows. This protein functions as a dosage-dependent inducer in mitotic control. It is a tyrosine protein phosphatase required for progression of the cell cycle. It may directly dephosphorylate p34(cdc2) and activate the p34(cdc2) kinase activity. This chain is M-phase inducer phosphatase 3 (cdc25-3), found in Xenopus laevis (African clawed frog).